A 261-amino-acid polypeptide reads, in one-letter code: Small ribosomal subunit protein uS3 (261 aa).

Positions 39 to 107 (VREYLKRKLA…PVHVSIEEIR (69 aa)) constitute a KH type-2 domain. Residues 213–261 (QPVAEEPAADDRRPRRTPGRPDGDKPRTRTVKKVDGAADPAKRVRKAGA) form a disordered region. A compositionally biased stretch (basic and acidic residues) spans 221–254 (ADDRRPRRTPGRPDGDKPRTRTVKKVDGAADPAK).

Belongs to the universal ribosomal protein uS3 family. In terms of assembly, part of the 30S ribosomal subunit. Forms a tight complex with proteins S10 and S14.

Functionally, binds the lower part of the 30S subunit head. Binds mRNA in the 70S ribosome, positioning it for translation. In Dechloromonas aromatica (strain RCB), this protein is Small ribosomal subunit protein uS3.